The following is a 235-amino-acid chain: Carbohydrate deacetylase (235 aa).

The Mg(2+) site is built by His61 and His124.

The protein belongs to the YdjC deacetylase family. Requires Mg(2+) as cofactor.

Probably catalyzes the deacetylation of acetylated carbohydrates an important step in the degradation of oligosaccharides. This chain is Carbohydrate deacetylase, found in Bacillus cereus (strain 03BB102).